The primary structure comprises 524 residues: Probable myosin-binding protein 5 (524 aa).

The chain crosses the membrane as a helical span at residues 20–40 (FLIYALLEWILIIILFIDGFL). Residues 299 to 397 (SILQHLNRQV…ELEAGIEVYR (99 aa)) form the GTD-binding domain. A coiled-coil region spans residues 462-490 (SRKDMLVKEISEITERLNAIESKGELLQQ).

It localises to the membrane. Its function is as follows. Probable membrane-anchored myosin receptors. The chain is Probable myosin-binding protein 5 from Arabidopsis thaliana (Mouse-ear cress).